Here is a 256-residue protein sequence, read N- to C-terminus: Dihydroorotate dehydrogenase B (NAD(+)), electron transfer subunit (256 aa).

The region spanning 1-101 is the FAD-binding FR-type domain; that stretch reads MKKAHLTVQS…LGPLGNGFPV (101 aa). FAD-binding positions include 52–55, 69–71, and 76–77; these read RPLS, IYR, and GT. 4 residues coordinate [2Fe-2S] cluster: cysteine 220, cysteine 225, cysteine 228, and cysteine 243.

Belongs to the PyrK family. In terms of assembly, heterotetramer of 2 PyrK and 2 PyrD type B subunits. [2Fe-2S] cluster is required as a cofactor. It depends on FAD as a cofactor.

Its pathway is pyrimidine metabolism; UMP biosynthesis via de novo pathway; orotate from (S)-dihydroorotate (NAD(+) route): step 1/1. In terms of biological role, responsible for channeling the electrons from the oxidation of dihydroorotate from the FMN redox center in the PyrD type B subunit to the ultimate electron acceptor NAD(+). This Bacillus velezensis (strain DSM 23117 / BGSC 10A6 / LMG 26770 / FZB42) (Bacillus amyloliquefaciens subsp. plantarum) protein is Dihydroorotate dehydrogenase B (NAD(+)), electron transfer subunit.